The primary structure comprises 339 residues: Transcription initiation factor IIB (339 aa).

Residues 39 to 70 form a TFIIB-type zinc finger; the sequence is EELICPVCGSKSIIKDYERAEIVCEMCGCVLQ. Zn(2+) is bound by residues C43, C46, C62, and C65. 2 tandem repeats follow at residues 156–239 and 250–331.

It belongs to the TFIIB family.

Stabilizes TBP binding to an archaeal box-A promoter. Also responsible for recruiting RNA polymerase II to the pre-initiation complex (DNA-TBP-TFIIB). This is Transcription initiation factor IIB from Methanococcus maripaludis (strain C5 / ATCC BAA-1333).